The primary structure comprises 467 residues: L-seryl-tRNA(Sec) selenium transferase (467 aa).

Lysine 298 is modified (N6-(pyridoxal phosphate)lysine).

The protein belongs to the SelA family. It depends on pyridoxal 5'-phosphate as a cofactor.

Its subcellular location is the cytoplasm. The catalysed reaction is L-seryl-tRNA(Sec) + selenophosphate + H(+) = L-selenocysteinyl-tRNA(Sec) + phosphate. The protein operates within aminoacyl-tRNA biosynthesis; selenocysteinyl-tRNA(Sec) biosynthesis; selenocysteinyl-tRNA(Sec) from L-seryl-tRNA(Sec) (bacterial route): step 1/1. In terms of biological role, converts seryl-tRNA(Sec) to selenocysteinyl-tRNA(Sec) required for selenoprotein biosynthesis. The chain is L-seryl-tRNA(Sec) selenium transferase from Alkaliphilus oremlandii (strain OhILAs) (Clostridium oremlandii (strain OhILAs)).